The chain runs to 299 residues: Acetylglutamate kinase (299 aa).

Substrate contacts are provided by residues 72-73 (GG), Arg-94, and Asn-196.

Belongs to the acetylglutamate kinase family. ArgB subfamily.

It localises to the cytoplasm. The catalysed reaction is N-acetyl-L-glutamate + ATP = N-acetyl-L-glutamyl 5-phosphate + ADP. It functions in the pathway amino-acid biosynthesis; L-arginine biosynthesis; N(2)-acetyl-L-ornithine from L-glutamate: step 2/4. Functionally, catalyzes the ATP-dependent phosphorylation of N-acetyl-L-glutamate. In Burkholderia thailandensis (strain ATCC 700388 / DSM 13276 / CCUG 48851 / CIP 106301 / E264), this protein is Acetylglutamate kinase.